A 284-amino-acid polypeptide reads, in one-letter code: Bifunctional protein FolD (284 aa).

NADP(+) is bound by residues glycine 166–serine 168, serine 191, and isoleucine 232.

This sequence belongs to the tetrahydrofolate dehydrogenase/cyclohydrolase family. Homodimer.

The enzyme catalyses (6R)-5,10-methylene-5,6,7,8-tetrahydrofolate + NADP(+) = (6R)-5,10-methenyltetrahydrofolate + NADPH. It carries out the reaction (6R)-5,10-methenyltetrahydrofolate + H2O = (6R)-10-formyltetrahydrofolate + H(+). The protein operates within one-carbon metabolism; tetrahydrofolate interconversion. Catalyzes the oxidation of 5,10-methylenetetrahydrofolate to 5,10-methenyltetrahydrofolate and then the hydrolysis of 5,10-methenyltetrahydrofolate to 10-formyltetrahydrofolate. This chain is Bifunctional protein FolD, found in Neisseria meningitidis serogroup B (strain ATCC BAA-335 / MC58).